The following is a 670-amino-acid chain: NAD(P)H-quinone oxidoreductase subunit 5, chloroplastic (670 aa).

The next 16 membrane-spanning stretches (helical) occupy residues 9 to 29, 39 to 59, 85 to 105, 120 to 140, 144 to 164, 188 to 208, 215 to 235, 258 to 278, 290 to 310, 327 to 347, 354 to 374, 395 to 415, 424 to 444, 479 to 499, 534 to 554, and 648 to 668; these read GLIP…LMSF, FVGS…LLFF, IGYL…SVAV, GYIR…GLIV, LIQV…LVGF, GLLL…FDII, LLLT…LLFL, TPIS…FLVA, LMIL…CLAV, LGYM…FHLI, ALLF…VGYD, GVTF…ACFW, AFFH…LTGF, MTLP…LGLP, SATS…LYSP, and LFVI…NSVF.

The protein belongs to the complex I subunit 5 family. NDH is composed of at least 16 different subunits, 5 of which are encoded in the nucleus.

Its subcellular location is the plastid. The protein resides in the chloroplast thylakoid membrane. It carries out the reaction a plastoquinone + NADH + (n+1) H(+)(in) = a plastoquinol + NAD(+) + n H(+)(out). The enzyme catalyses a plastoquinone + NADPH + (n+1) H(+)(in) = a plastoquinol + NADP(+) + n H(+)(out). NDH shuttles electrons from NAD(P)H:plastoquinone, via FMN and iron-sulfur (Fe-S) centers, to quinones in the photosynthetic chain and possibly in a chloroplast respiratory chain. The immediate electron acceptor for the enzyme in this species is believed to be plastoquinone. Couples the redox reaction to proton translocation, and thus conserves the redox energy in a proton gradient. The polypeptide is NAD(P)H-quinone oxidoreductase subunit 5, chloroplastic (ndhF) (Chaetosphaeridium globosum (Charophycean green alga)).